The following is a 183-amino-acid chain: Peptide deformylase (183 aa).

Residues cysteine 90 and histidine 132 each coordinate Fe cation. The active site involves glutamate 133. Histidine 136 lines the Fe cation pocket.

It belongs to the polypeptide deformylase family. The cofactor is Fe(2+).

The enzyme catalyses N-terminal N-formyl-L-methionyl-[peptide] + H2O = N-terminal L-methionyl-[peptide] + formate. Its function is as follows. Removes the formyl group from the N-terminal Met of newly synthesized proteins. Requires at least a dipeptide for an efficient rate of reaction. N-terminal L-methionine is a prerequisite for activity but the enzyme has broad specificity at other positions. This Parafrankia sp. (strain EAN1pec) protein is Peptide deformylase.